Consider the following 214-residue polypeptide: MFVLSTAMACLVYIYIYIYDEEKKRELKVRNKMTNLLFFQFLLLTTASSLTHISAQTVPPPPPPPTSAATPPSRAAQEFLDAHNKARSEVGVGPLTWSPMLAKETSLLVRYQRDKQNCSFANLSNGKYGGNQLWASGTVVTPRMAVDSWVAEKKFYNYENNSCTGDDKCGVYTQIVWKKSIELGCAQRTCYEGPATLTVCFYNPPGNVIGEKPY.

Residues 1–19 (MFVLSTAMACLVYIYIYIY) form the signal peptide. A run of 3 repeats spans residues 13–14 (YI), 15–16 (YI), and 17–18 (YI). A 3 X 2 AA tandem repeats of Y-I region spans residues 13–18 (YIYIYI). The region spanning 80–200 (LDAHNKARSE…YEGPATLTVC (121 aa)) is the SCP domain.

The protein belongs to the CRISP family. In terms of tissue distribution, highly expressed in the stigma and stylar cortex throughout pistil development. Not expressed in other organs.

In terms of biological role, may protect the outer tissues of the pistil from pathogen attack. The protein is STS14 protein (STS14) of Solanum tuberosum (Potato).